A 196-amino-acid polypeptide reads, in one-letter code: Imidazoleglycerol-phosphate dehydratase (196 aa).

It belongs to the imidazoleglycerol-phosphate dehydratase family.

Its subcellular location is the cytoplasm. It catalyses the reaction D-erythro-1-(imidazol-4-yl)glycerol 3-phosphate = 3-(imidazol-4-yl)-2-oxopropyl phosphate + H2O. It functions in the pathway amino-acid biosynthesis; L-histidine biosynthesis; L-histidine from 5-phospho-alpha-D-ribose 1-diphosphate: step 6/9. This Desulfitobacterium hafniense (strain Y51) protein is Imidazoleglycerol-phosphate dehydratase.